Consider the following 452-residue polypeptide: Isocitrate dehydrogenase [NADP], mitochondrial (452 aa).

Residues 1–39 constitute a mitochondrion transit peptide; it reads MAGYLRVVRSLCRASGSRPAWAPAALTAPTSQEQTRRHY. N6-acetyllysine is present on residues Lys-45, Lys-48, Lys-67, and Lys-69. N6-acetyllysine; alternate occurs at positions 80 and 106. Lys-80 and Lys-106 each carry N6-succinyllysine; alternate. Residues 115–117 and Arg-122 each bind NADP(+); that span reads TIT. Thr-117 provides a ligand contact to substrate. Residues 134–140 and Arg-149 contribute to the substrate site; that span reads SPNGTIR. Position 155 is an N6-acetyllysine (Lys-155). Lys-166 is subject to N6-acetyllysine; alternate. Lys-166 is subject to N6-succinyllysine; alternate. Residue Arg-172 coordinates substrate. 2 positions are modified to N6-acetyllysine; alternate: Lys-180 and Lys-193. An N6-succinyllysine; alternate mark is found at Lys-180 and Lys-193. Position 199 is an N6-acetyllysine (Lys-199). Lys-256 bears the N6-acetyllysine; alternate mark. Lys-256 carries the post-translational modification N6-succinyllysine; alternate. 4 positions are modified to N6-acetyllysine: Lys-263, Lys-272, Lys-275, and Lys-280. At Lys-282 the chain carries N6-acetyllysine; alternate. N6-succinyllysine; alternate is present on Lys-282. Asp-291 contributes to the Mn(2+) binding site. Lys-299 contacts NADP(+). Asp-314 contacts Mn(2+). Residues 349-354 and Asn-367 each bind NADP(+); that span reads GTVTRH. Lys-384 carries the N6-acetyllysine; alternate modification. N6-succinyllysine; alternate is present on Lys-384. N6-acetyllysine occurs at positions 400, 413, and 442.

Belongs to the isocitrate and isopropylmalate dehydrogenases family. In terms of assembly, homodimer. The cofactor is Mg(2+). Mn(2+) serves as cofactor. Acetylation at Lys-413 dramatically reduces catalytic activity. Deacetylated by SIRT3.

The protein localises to the mitochondrion. It carries out the reaction D-threo-isocitrate + NADP(+) = 2-oxoglutarate + CO2 + NADPH. Plays a role in intermediary metabolism and energy production. It may tightly associate or interact with the pyruvate dehydrogenase complex. This Macaca fascicularis (Crab-eating macaque) protein is Isocitrate dehydrogenase [NADP], mitochondrial (IDH2).